The sequence spans 443 residues: Phosphoglucosamine mutase (443 aa).

The active-site Phosphoserine intermediate is the Ser103. Mg(2+) is bound by residues Ser103, Asp244, Asp246, and Asp248. Ser103 is subject to Phosphoserine.

It belongs to the phosphohexose mutase family. The cofactor is Mg(2+). Post-translationally, activated by phosphorylation.

It catalyses the reaction alpha-D-glucosamine 1-phosphate = D-glucosamine 6-phosphate. Functionally, catalyzes the conversion of glucosamine-6-phosphate to glucosamine-1-phosphate. The chain is Phosphoglucosamine mutase from Pelagibacter ubique (strain HTCC1062).